A 185-amino-acid polypeptide reads, in one-letter code: Testis development-related protein (185 aa).

2 disordered regions span residues 1–29 (MWKL…PPAA) and 121–156 (ADPE…ANSS).

It belongs to the TDRP family. As to quaternary structure, interacts with PRM2. In terms of tissue distribution, expressed in spermatogenic cells, especially in spermatocytes (at protein level).

Its subcellular location is the nucleus. The protein localises to the cytoplasm. Its function is as follows. Contributes to normal sperm motility, but not essential for male fertility. The chain is Testis development-related protein (TDRP) from Homo sapiens (Human).